A 538-amino-acid chain; its full sequence is indole-2-monooxygenase (538 aa).

A helical transmembrane segment spans residues 22-42; sequence ALLLAIPFSLLLLPLLLRYLA. Residue Cys481 coordinates heme.

This sequence belongs to the cytochrome P450 family. It depends on heme as a cofactor.

Its subcellular location is the membrane. It carries out the reaction indole + reduced [NADPH--hemoprotein reductase] + O2 = indolin-2-one + oxidized [NADPH--hemoprotein reductase] + H2O + H(+). It participates in secondary metabolite biosynthesis; 2,4-dihydroxy-1,4-benzoxazin-3-one biosynthesis; 2,4-dihydroxy-1,4-benzoxazin-3-one from indoleglycerol phosphate: step 2/5. Its function is as follows. Catalyzes the conversion of indole to indolin-2-one. In Zea mays (Maize), this protein is indole-2-monooxygenase (CYP71C4).